Here is a 548-residue protein sequence, read N- to C-terminus: Tylosin resistance ATP-binding protein TlrC (548 aa).

ABC transporter domains lie at 9–265 (LSLH…RRRQ) and 347–547 (IATA…VSGA). Residues 41-48 (GDNGAGKS) and 387-394 (GPNGAGKS) each bind ATP.

Belongs to the ABC transporter superfamily.

Its subcellular location is the cell membrane. In terms of biological role, responsible for tylosin resistance, and is proposed to be a subunit of a multicomponent export system for the energy-dependent efflux of tylosin. This Streptomyces fradiae (Streptomyces roseoflavus) protein is Tylosin resistance ATP-binding protein TlrC (tlrC).